The following is a 515-amino-acid chain: Maturase K (515 aa).

This sequence belongs to the intron maturase 2 family. MatK subfamily.

The protein localises to the plastid. The protein resides in the chloroplast. Usually encoded in the trnK tRNA gene intron. Probably assists in splicing its own and other chloroplast group II introns. The chain is Maturase K from Pinus elliottii (Slash pine).